The sequence spans 136 residues: S-protein homolog 6 (136 aa).

Residues 1-17 (MFIIIFIVLISLIGCET) form the signal peptide. Residues Asn-76 and Asn-108 are each glycosylated (N-linked (GlcNAc...) asparagine).

It belongs to the plant self-incompatibility (S1) protein family.

The protein resides in the secreted. The chain is S-protein homolog 6 from Arabidopsis thaliana (Mouse-ear cress).